The following is a 506-amino-acid chain: ATP synthase subunit alpha (506 aa).

170–177 (GDRQTGKT) is an ATP binding site.

It belongs to the ATPase alpha/beta chains family. F-type ATPases have 2 components, CF(1) - the catalytic core - and CF(0) - the membrane proton channel. CF(1) has five subunits: alpha(3), beta(3), gamma(1), delta(1), epsilon(1). CF(0) has four main subunits: a(1), b(1), b'(1) and c(9-12).

It is found in the cellular thylakoid membrane. The enzyme catalyses ATP + H2O + 4 H(+)(in) = ADP + phosphate + 5 H(+)(out). Functionally, produces ATP from ADP in the presence of a proton gradient across the membrane. The alpha chain is a regulatory subunit. The polypeptide is ATP synthase subunit alpha (Synechococcus sp. (strain CC9902)).